A 220-amino-acid chain; its full sequence is 7-cyano-7-deazaguanine synthase (220 aa).

Residue Leu7–Leu17 coordinates ATP. Cys191, Cys199, Cys202, and Cys205 together coordinate Zn(2+).

The protein belongs to the QueC family. Homodimer. It depends on Zn(2+) as a cofactor.

It catalyses the reaction 7-carboxy-7-deazaguanine + NH4(+) + ATP = 7-cyano-7-deazaguanine + ADP + phosphate + H2O + H(+). It functions in the pathway purine metabolism; 7-cyano-7-deazaguanine biosynthesis. Catalyzes the ATP-dependent conversion of 7-carboxy-7-deazaguanine (CDG) to 7-cyano-7-deazaguanine (preQ(0)). This chain is 7-cyano-7-deazaguanine synthase, found in Desulforudis audaxviator (strain MP104C).